The chain runs to 543 residues: Chaperonin GroEL (543 aa).

ATP-binding positions include 29–32 (TLGP), 86–90 (DGTTT), G413, 476–478 (NAA), and D492.

This sequence belongs to the chaperonin (HSP60) family. In terms of assembly, forms a cylinder of 14 subunits composed of two heptameric rings stacked back-to-back. Interacts with the co-chaperonin GroES.

The protein localises to the cytoplasm. The catalysed reaction is ATP + H2O + a folded polypeptide = ADP + phosphate + an unfolded polypeptide.. Its function is as follows. Together with its co-chaperonin GroES, plays an essential role in assisting protein folding. The GroEL-GroES system forms a nano-cage that allows encapsulation of the non-native substrate proteins and provides a physical environment optimized to promote and accelerate protein folding. In Streptococcus pyogenes serotype M5 (strain Manfredo), this protein is Chaperonin GroEL.